Reading from the N-terminus, the 464-residue chain is Methionine aminopeptidase 2-2 (464 aa).

The tract at residues Met-1–Pro-106 is disordered. Residues Glu-37–Asp-53 show a composition bias toward acidic residues. Residues Pro-70 to Ser-86 are compositionally biased toward basic residues. A substrate-binding site is contributed by His-216. A divalent metal cation-binding residues include Asp-237, Asp-248, and His-317. His-325 provides a ligand contact to substrate. Residues Glu-350 and Glu-445 each contribute to the a divalent metal cation site.

This sequence belongs to the peptidase M24A family. Methionine aminopeptidase eukaryotic type 2 subfamily. It depends on Co(2+) as a cofactor. Requires Zn(2+) as cofactor. Mn(2+) serves as cofactor. Fe(2+) is required as a cofactor.

It localises to the cytoplasm. It catalyses the reaction Release of N-terminal amino acids, preferentially methionine, from peptides and arylamides.. Cotranslationally removes the N-terminal methionine from nascent proteins. The N-terminal methionine is often cleaved when the second residue in the primary sequence is small and uncharged (Met-Ala-, Cys, Gly, Pro, Ser, Thr, or Val). This is Methionine aminopeptidase 2-2 from Talaromyces stipitatus (strain ATCC 10500 / CBS 375.48 / QM 6759 / NRRL 1006) (Penicillium stipitatum).